Consider the following 275-residue polypeptide: Membrane protein insertase MisCB (275 aa).

Residues 1-18 (MLKTYQKLLAMGIFLIVL) form the signal peptide. C19 carries N-palmitoyl cysteine lipidation. C19 carries S-diacylglycerol cysteine lipidation. 5 helical membrane passes run 63–83 (YGLS…PLFV), 139–159 (AMGC…YYAI), 172–192 (WFSL…MYFV), 219–239 (LMVF…PAAL), and 240–260 (PLYW…LQMT).

This sequence belongs to the OXA1/ALB3/YidC family. Type 2 subfamily. As to quaternary structure, mostly monomeric, it may also form dimers. Interacts with SpoIIIAE. Forms a complex with the F(1)F(0) ATP synthase in which can be found the alpha, beta, gamma, delta and epsilon subunits of F(1) and a, b and subunits of F(0). YqgA is found in the same complex.

Its subcellular location is the cell membrane. Required for the insertion and/or proper folding and/or complex formation of integral membrane proteins into the membrane. Involved in integration of membrane proteins that insert both dependently and independently of the Sec translocase complex, as well as at least some lipoproteins. Also involved in protein secretion processes. It has an overlapping, although partly distinct, function compared to SpoIIIJ(MisCB). The protein is Membrane protein insertase MisCB (misCB) of Bacillus subtilis (strain 168).